A 194-amino-acid polypeptide reads, in one-letter code: Small ribosomal subunit protein uS7 (194 aa).

It belongs to the universal ribosomal protein uS7 family. Part of the 30S ribosomal subunit.

Functionally, one of the primary rRNA binding proteins, it binds directly to 16S rRNA where it nucleates assembly of the head domain of the 30S subunit. Is located at the subunit interface close to the decoding center. The chain is Small ribosomal subunit protein uS7 from Methanocorpusculum labreanum (strain ATCC 43576 / DSM 4855 / Z).